The sequence spans 259 residues: Enolase-phosphatase E1 (259 aa).

2 residues coordinate Mg(2+): aspartate 16 and glutamate 18. Substrate-binding positions include 151–152 (SS) and lysine 185. Position 210 (aspartate 210) interacts with Mg(2+).

This sequence belongs to the HAD-like hydrolase superfamily. MasA/MtnC family. In terms of assembly, monomer. The cofactor is Mg(2+).

It localises to the cytoplasm. It is found in the nucleus. The enzyme catalyses 5-methylsulfanyl-2,3-dioxopentyl phosphate + H2O = 1,2-dihydroxy-5-(methylsulfanyl)pent-1-en-3-one + phosphate. It functions in the pathway amino-acid biosynthesis; L-methionine biosynthesis via salvage pathway; L-methionine from S-methyl-5-thio-alpha-D-ribose 1-phosphate: step 3/6. It participates in amino-acid biosynthesis; L-methionine biosynthesis via salvage pathway; L-methionine from S-methyl-5-thio-alpha-D-ribose 1-phosphate: step 4/6. In terms of biological role, bifunctional enzyme that catalyzes the enolization of 2,3-diketo-5-methylthiopentyl-1-phosphate (DK-MTP-1-P) into the intermediate 2-hydroxy-3-keto-5-methylthiopentenyl-1-phosphate (HK-MTPenyl-1-P), which is then dephosphorylated to form the acireductone 1,2-dihydroxy-3-keto-5-methylthiopentene (DHK-MTPene). The sequence is that of Enolase-phosphatase E1 (enoph1) from Xenopus tropicalis (Western clawed frog).